The sequence spans 311 residues: Methionyl-tRNA formyltransferase (311 aa).

Residue 112–115 (SLLP) participates in (6S)-5,6,7,8-tetrahydrofolate binding.

The protein belongs to the Fmt family.

The enzyme catalyses L-methionyl-tRNA(fMet) + (6R)-10-formyltetrahydrofolate = N-formyl-L-methionyl-tRNA(fMet) + (6S)-5,6,7,8-tetrahydrofolate + H(+). Its function is as follows. Attaches a formyl group to the free amino group of methionyl-tRNA(fMet). The formyl group appears to play a dual role in the initiator identity of N-formylmethionyl-tRNA by promoting its recognition by IF2 and preventing the misappropriation of this tRNA by the elongation apparatus. The protein is Methionyl-tRNA formyltransferase of Geobacter metallireducens (strain ATCC 53774 / DSM 7210 / GS-15).